The following is a 250-amino-acid chain: tRNA pseudouridine synthase A (250 aa).

D53 serves as the catalytic Nucleophile. Y111 provides a ligand contact to substrate.

Belongs to the tRNA pseudouridine synthase TruA family. Homodimer.

The catalysed reaction is uridine(38/39/40) in tRNA = pseudouridine(38/39/40) in tRNA. Formation of pseudouridine at positions 38, 39 and 40 in the anticodon stem and loop of transfer RNAs. The sequence is that of tRNA pseudouridine synthase A from Streptococcus uberis (strain ATCC BAA-854 / 0140J).